The sequence spans 144 residues: Large ribosomal subunit protein uL15 (144 aa).

A disordered region spans residues 1 to 57; that stretch reads MELNNLKPAEGAKHAKRRVGRGIGSGLGKTAGRGHKGQKSRSGGFHKVGFEGGQMPL. Gly residues predominate over residues 21-31; the sequence is RGIGSGLGKTA.

This sequence belongs to the universal ribosomal protein uL15 family. As to quaternary structure, part of the 50S ribosomal subunit.

In terms of biological role, binds to the 23S rRNA. The protein is Large ribosomal subunit protein uL15 of Paraburkholderia xenovorans (strain LB400).